The chain runs to 267 residues: TKIFALLALHALLVSGTTAAIIPQCSLAPNAIIPQFIPPVTALGNEHLAVQAIRLQQVLSASILQQPIAQLQQHFLAHLTVQTITRRRQQQQQQQQQQQQFLSSLSALAVRNQAAYLQQQLLTSNPHSLANAAAYQQQQQLQLAMANPTAYVQQQLLLSNPQAATNAATYLQQQQFQQILPALSQLAMANPTAYLQQQQLLPINQLALANTDAYLQQQQLLPVNPLVVANPLVAAFLQQQQLSSFNQISLVNPALSWQQPIIGGAIF.

Residues 1–19 (TKIFALLALHALLVSGTTA) form the signal peptide.

Belongs to the zein family.

Major seed storage prolamin. The protein is Kafirin PSK8 of Sorghum bicolor (Sorghum).